The following is a 321-amino-acid chain: Lipoyl synthase (321 aa).

Cysteine 68, cysteine 73, cysteine 79, cysteine 94, cysteine 98, cysteine 101, and serine 308 together coordinate [4Fe-4S] cluster. The Radical SAM core domain occupies 80–297 (FNHGTATFMI…KAIALDLGFT (218 aa)).

This sequence belongs to the radical SAM superfamily. Lipoyl synthase family. It depends on [4Fe-4S] cluster as a cofactor.

It localises to the cytoplasm. The enzyme catalyses [[Fe-S] cluster scaffold protein carrying a second [4Fe-4S](2+) cluster] + N(6)-octanoyl-L-lysyl-[protein] + 2 oxidized [2Fe-2S]-[ferredoxin] + 2 S-adenosyl-L-methionine + 4 H(+) = [[Fe-S] cluster scaffold protein] + N(6)-[(R)-dihydrolipoyl]-L-lysyl-[protein] + 4 Fe(3+) + 2 hydrogen sulfide + 2 5'-deoxyadenosine + 2 L-methionine + 2 reduced [2Fe-2S]-[ferredoxin]. It participates in protein modification; protein lipoylation via endogenous pathway; protein N(6)-(lipoyl)lysine from octanoyl-[acyl-carrier-protein]: step 2/2. Its function is as follows. Catalyzes the radical-mediated insertion of two sulfur atoms into the C-6 and C-8 positions of the octanoyl moiety bound to the lipoyl domains of lipoate-dependent enzymes, thereby converting the octanoylated domains into lipoylated derivatives. This is Lipoyl synthase from Tolumonas auensis (strain DSM 9187 / NBRC 110442 / TA 4).